Consider the following 322-residue polypeptide: MKIPRINHNDLFAIVIKLRQYIQDNKIDNEINIVDLIDLIDSMIENKTSEIKFDTVTFEIFTDISLIYYTNKISDINIFLDHNFYSRDNEYYTYFALSIGAMDVFKWLISHGFSYDMSKILNYLHKNCGMSIFRKIFDDDFLNMDNSIINNAVKSAYSNEIEEYVDYFIRSNHVVKITRENIIDVIEYAVQINNCDIIKILVKKFIFWANDYRKIFIQAVRNNNFTITKTLLHSIMYRTNKETLIKFNKNEALKYAIMMKNYDMIELLINYNIQTDHVVKYHIEGALDIKNDDHLDKILKYIDEIVCKKCSKKNREVVIIGF.

ANK repeat units lie at residues 88-117 (DNEY…SYDM), 181-210 (NIID…FWAN), and 248-277 (NKNE…QTDH).

In Acanthamoeba polyphaga (Amoeba), this protein is Putative ankyrin repeat protein L897.